The sequence spans 199 residues: Molybdenum cofactor guanylyltransferase (199 aa).

Residues 12–14 (LAG), lysine 25, asparagine 53, aspartate 71, and aspartate 101 each bind GTP. Position 101 (aspartate 101) interacts with Mg(2+).

This sequence belongs to the MobA family. As to quaternary structure, monomer. The cofactor is Mg(2+).

Its subcellular location is the cytoplasm. It carries out the reaction Mo-molybdopterin + GTP + H(+) = Mo-molybdopterin guanine dinucleotide + diphosphate. In terms of biological role, transfers a GMP moiety from GTP to Mo-molybdopterin (Mo-MPT) cofactor (Moco or molybdenum cofactor) to form Mo-molybdopterin guanine dinucleotide (Mo-MGD) cofactor. In Cupriavidus taiwanensis (strain DSM 17343 / BCRC 17206 / CCUG 44338 / CIP 107171 / LMG 19424 / R1) (Ralstonia taiwanensis (strain LMG 19424)), this protein is Molybdenum cofactor guanylyltransferase.